The sequence spans 189 residues: Dynactin subunit 6 (189 aa).

This sequence belongs to the dynactin subunits 5/6 family. Dynactin subunit 6 subfamily. Subunit of dynactin, a multiprotein complex part of a tripartite complex with dynein and a adapter, such as BICDL1, BICD2 or HOOK3. The dynactin complex is built around ACTR1A/ACTB filament and consists of an actin-related filament composed of a shoulder domain, a pointed end and a barbed end.

The protein localises to the cytoplasm. It localises to the cytoskeleton. Its function is as follows. Part of the dynactin complex that activates the molecular motor dynein for ultra-processive transport along microtubules. The sequence is that of Dynactin subunit 6 (dynF) from Dictyostelium discoideum (Social amoeba).